The sequence spans 333 residues: Ketol-acid reductoisomerase (NADP(+)) (333 aa).

The KARI N-terminal Rossmann domain occupies 2–182 (ANIYYDDSCD…GGGRAGILET (181 aa)). NADP(+) contacts are provided by residues 25–28 (YGSQ), Arg-48, Ser-51, Ser-53, and 83–86 (DTIQ). His-108 is a catalytic residue. Residue Gly-134 participates in NADP(+) binding. The KARI C-terminal knotted domain occupies 183–331 (SFREETETDL…TKLRSMMKWL (149 aa)). Mg(2+) contacts are provided by Asp-191, Glu-195, Glu-227, and Glu-231. Ser-252 lines the substrate pocket.

It belongs to the ketol-acid reductoisomerase family. Mg(2+) is required as a cofactor.

It catalyses the reaction (2R)-2,3-dihydroxy-3-methylbutanoate + NADP(+) = (2S)-2-acetolactate + NADPH + H(+). The catalysed reaction is (2R,3R)-2,3-dihydroxy-3-methylpentanoate + NADP(+) = (S)-2-ethyl-2-hydroxy-3-oxobutanoate + NADPH + H(+). It functions in the pathway amino-acid biosynthesis; L-isoleucine biosynthesis; L-isoleucine from 2-oxobutanoate: step 2/4. Its pathway is amino-acid biosynthesis; L-valine biosynthesis; L-valine from pyruvate: step 2/4. Functionally, involved in the biosynthesis of branched-chain amino acids (BCAA). Catalyzes an alkyl-migration followed by a ketol-acid reduction of (S)-2-acetolactate (S2AL) to yield (R)-2,3-dihydroxy-isovalerate. In the isomerase reaction, S2AL is rearranged via a Mg-dependent methyl migration to produce 3-hydroxy-3-methyl-2-ketobutyrate (HMKB). In the reductase reaction, this 2-ketoacid undergoes a metal-dependent reduction by NADPH to yield (R)-2,3-dihydroxy-isovalerate. The chain is Ketol-acid reductoisomerase (NADP(+)) from Leptospira biflexa serovar Patoc (strain Patoc 1 / Ames).